Consider the following 955-residue polypeptide: Serine-aspartate repeat-containing protein C (955 aa).

The N-terminal stretch at 1 to 50 is a signal peptide; it reads MNNKKTVTNRKGMIPNRLNKFSIRKYSVGTASILVGTTLIFGLSGHEAKA. The disordered stretch occupies residues 51–166; that stretch reads AEHTNGELNQ…TPKTTTIKPR (116 aa). The segment at 51–495 is ligand binding A region; sequence AEHTNGELNQ…GSSTANGDQK (445 aa). Over residues 56–71 the composition is skewed to polar residues; it reads GELNQSKNETTAPSEN. Positions 72 to 83 are enriched in basic and acidic residues; the sequence is KTTEKVDSHQLK. Residues 84-114 show a composition bias toward polar residues; the sequence is DNTQTATADQPKVTMSDSATFKETSSNMQSP. The span at 115-132 shows a compositional bias: low complexity; that stretch reads QNATASQSTTQTSNVTTN. Positions 133 to 164 are enriched in polar residues; it reads DKSSTTYSNETDKSNLTQAKDVSATPKTTTIK. 2 CNA-B domains span residues 496–606 and 607–717; these read KYNL…YKTP and KYSL…EEET. The segment at 678 to 935 is disordered; it reads TQTGTNTTED…NNSNNGTLFG (258 aa). Composition is skewed to acidic residues over residues 685 to 695 and 712 to 894; these read TEDDKDADGGE and YYEE…DSDS. Positions 918 to 922 match the LPXTG sorting signal motif; the sequence is LPETG. Residues 920-935 are compositionally biased toward low complexity; sequence ETGSENNNSNNGTLFG. Position 921 is a pentaglycyl murein peptidoglycan amidated threonine (T921). A propeptide spans 922–955 (removed by sortase); that stretch reads GSENNNSNNGTLFGGLFAALGSLLLFGRRKKQNK.

It belongs to the serine-aspartate repeat-containing protein (SDr) family. As to quaternary structure, homodimerizes; via N2-Domain. Interacts with host NRXN1; this interaction mediates bacterial attachment to host cells.

The protein resides in the secreted. It localises to the cell wall. Cell surface-associated calcium-binding protein which plays an important role in adhesion and pathogenesis. Mediates interactions with components of the extracellular matrix such as host NRXN1 to promote bacterial adhesion. This Staphylococcus aureus (strain MW2) protein is Serine-aspartate repeat-containing protein C (sdrC).